We begin with the raw amino-acid sequence, 387 residues long: Probable nitrate transporter NarT (387 aa).

12 helical membrane passes run 14–34, 45–65, 69–89, 97–117, 137–157, 161–181, 211–231, 246–266, 268–288, 294–314, 330–350, and 358–378; these read TLSL…MPFI, ISVI…PFGY, IVGA…PIFL, GMLM…SVGV, GVGN…AGAI, NTVR…FFLG, WYFI…NFLV, GIFI…GDKF, AVQA…ILSL, LFTI…GLIF, GIVS…ITFV, and HLAF…MIHL.

This sequence belongs to the major facilitator superfamily. Nitrate/nitrite porter (TC 2.A.1.8) family.

The protein localises to the cell membrane. Probably required for nitrate uptake under anoxic conditions. Also possibly involved in excretion of nitrite produced by the dissimilatory reduction of nitrate. This chain is Probable nitrate transporter NarT (narT), found in Staphylococcus epidermidis (strain ATCC 35984 / DSM 28319 / BCRC 17069 / CCUG 31568 / BM 3577 / RP62A).